Here is a 266-residue protein sequence, read N- to C-terminus: Signal peptidase I (266 aa).

The Cytoplasmic portion of the chain corresponds to 1-20 (MQTDNTKSNTNKTAKQEWGS). A helical membrane pass occupies residues 21 to 41 (FVFVICIALLIRILIMEPFTV). The Periplasmic portion of the chain corresponds to 42 to 266 (PTGSMKATIL…IFRNLYNTDV (225 aa)). Residues Ser45 and Lys108 contribute to the active site.

This sequence belongs to the peptidase S26 family.

It localises to the cell inner membrane. The catalysed reaction is Cleavage of hydrophobic, N-terminal signal or leader sequences from secreted and periplasmic proteins.. This Rickettsia massiliae (strain Mtu5) protein is Signal peptidase I (lepB).